Here is a 265-residue protein sequence, read N- to C-terminus: Osteoclast-associated immunoglobulin-like receptor (265 aa).

The signal sequence occupies residues 1 to 18; the sequence is MVLSLILQLSTLWPACRA. The Extracellular portion of the chain corresponds to 19 to 231; it reads DFTPTAPLAS…LDYTQGNLIR (213 aa). Ig-like domains are found at residues 22-115 and 125-218; these read PTAP…SQPS and QLPR…SFEG. A glycan (N-linked (GlcNAc...) asparagine) is linked at asparagine 47. Cysteine 52 and cysteine 99 form a disulfide bridge. N-linked (GlcNAc...) asparagine glycosylation is present at asparagine 144. A helical membrane pass occupies residues 232-248; the sequence is LGLAGMVLICLGIIVTC. The Cytoplasmic portion of the chain corresponds to 249–265; sequence DWHSRSSAFDGLLPQQN.

This sequence belongs to the leukocyte receptor complex/polymeric immunoglobulin receptor (PIR/LRC) family. Specifically expressed in preosteoclasts or mature osteoclasts.

The protein resides in the cell membrane. Functionally, regulator of osteoclastogenesis which plays an important bone-specific function in osteoclast differentiation. This is Osteoclast-associated immunoglobulin-like receptor (Oscar) from Mus musculus (Mouse).